The following is a 253-amino-acid chain: 5'-nucleotidase SurE (253 aa).

D8, D9, S39, and N92 together coordinate a divalent metal cation.

The protein belongs to the SurE nucleotidase family. A divalent metal cation serves as cofactor.

Its subcellular location is the cytoplasm. It carries out the reaction a ribonucleoside 5'-phosphate + H2O = a ribonucleoside + phosphate. Functionally, nucleotidase that shows phosphatase activity on nucleoside 5'-monophosphates. This chain is 5'-nucleotidase SurE, found in Burkholderia thailandensis (strain ATCC 700388 / DSM 13276 / CCUG 48851 / CIP 106301 / E264).